Here is a 261-residue protein sequence, read N- to C-terminus: Ribosome biogenesis protein nsa2 (261 aa).

Basic and acidic residues-rich tracts occupy residues 1–36 (MPQN…HKQS) and 66–82 (KQHE…EKDP). Disordered regions lie at residues 1–44 (MPQN…NLRG) and 64–97 (AIKQ…SNPT). A Nuclear localization signal motif is present at residues 15–22 (GKRLDTEE).

It belongs to the eukaryotic ribosomal protein eS8 family. Ribosome biogenesis protein NSA2 subfamily. As to quaternary structure, component of the pre-66S ribosomal particle. Interacts with nop7 and rrp1. Interacts with rsa4 (via WD repeats).

The protein localises to the nucleus. Its subcellular location is the nucleolus. Its function is as follows. Involved in the biogenesis of the 60S ribosomal subunit. May play a part in the quality control of pre-60S particles. The chain is Ribosome biogenesis protein nsa2 (rbg-52) from Neurospora crassa (strain ATCC 24698 / 74-OR23-1A / CBS 708.71 / DSM 1257 / FGSC 987).